A 124-amino-acid polypeptide reads, in one-letter code: Large-conductance mechanosensitive channel (124 aa).

Helical transmembrane passes span 15–35 and 67–87; these read MDLA…NSLV and GSFL…FFLI.

Belongs to the MscL family. Homopentamer.

The protein resides in the cell membrane. Functionally, channel that opens in response to stretch forces in the membrane lipid bilayer. May participate in the regulation of osmotic pressure changes within the cell. In Lactobacillus johnsonii (strain CNCM I-12250 / La1 / NCC 533), this protein is Large-conductance mechanosensitive channel.